A 521-amino-acid chain; its full sequence is Cytochrome P450 1A1 (521 aa).

Phe-229 is a substrate binding site. Position 463 (Cys-463) interacts with heme.

This sequence belongs to the cytochrome P450 family. Heme is required as a cofactor.

It is found in the endoplasmic reticulum membrane. Its subcellular location is the microsome membrane. It carries out the reaction an organic molecule + reduced [NADPH--hemoprotein reductase] + O2 = an alcohol + oxidized [NADPH--hemoprotein reductase] + H2O + H(+). Its function is as follows. Cytochromes P450 are a group of heme-thiolate monooxygenases. They oxidize a variety of structurally unrelated compounds, including steroids, fatty acids, and xenobiotics. The polypeptide is Cytochrome P450 1A1 (cyp1a1) (Opsanus tau (Oyster toadfish)).